A 260-amino-acid chain; its full sequence is Imidazole glycerol phosphate synthase subunit HisF (260 aa).

Residues Asp-11 and Asp-130 contribute to the active site.

This sequence belongs to the HisA/HisF family. Heterodimer of HisH and HisF.

It is found in the cytoplasm. The enzyme catalyses 5-[(5-phospho-1-deoxy-D-ribulos-1-ylimino)methylamino]-1-(5-phospho-beta-D-ribosyl)imidazole-4-carboxamide + L-glutamine = D-erythro-1-(imidazol-4-yl)glycerol 3-phosphate + 5-amino-1-(5-phospho-beta-D-ribosyl)imidazole-4-carboxamide + L-glutamate + H(+). The protein operates within amino-acid biosynthesis; L-histidine biosynthesis; L-histidine from 5-phospho-alpha-D-ribose 1-diphosphate: step 5/9. IGPS catalyzes the conversion of PRFAR and glutamine to IGP, AICAR and glutamate. The HisF subunit catalyzes the cyclization activity that produces IGP and AICAR from PRFAR using the ammonia provided by the HisH subunit. The sequence is that of Imidazole glycerol phosphate synthase subunit HisF from Desulfatibacillum aliphaticivorans.